Here is a 29-residue protein sequence, read N- to C-terminus: Cyclotide cter-L (29 aa).

A cross-link (cyclopeptide (His-Asp)) is located at residues 1 to 29 (HEPCGESCVFIPCITTVVGCSCKNKVCYD). Intrachain disulfides connect C4-C20, C8-C22, and C13-C27.

Contains 3 disulfide bonds. Post-translationally, this is a cyclic peptide.

In terms of biological role, probably participates in a plant defense mechanism. This chain is Cyclotide cter-L, found in Clitoria ternatea (Butterfly pea).